Consider the following 363-residue polypeptide: D-proline dehydrogenase (363 aa).

3 to 17 lines the FAD pocket; the sequence is VAIVGGGIIGLFTAY.

The protein belongs to the DadA oxidoreductase family. In terms of assembly, homotetramer. FAD serves as cofactor.

Its subcellular location is the cell membrane. It carries out the reaction D-proline + A = 1-pyrroline-2-carboxylate + AH2. In terms of biological role, catalyzes the dehydrogenation of D-proline. Can also use other D-amino acids, but with lower efficiency. This is D-proline dehydrogenase (dpdh) from Pyrobaculum islandicum (strain DSM 4184 / JCM 9189 / GEO3).